Here is a 122-residue protein sequence, read N- to C-terminus: Large ribosomal subunit protein uL14c (122 aa).

It belongs to the universal ribosomal protein uL14 family. Part of the 50S ribosomal subunit.

The protein localises to the plastid. It localises to the chloroplast. Functionally, binds to 23S rRNA. This is Large ribosomal subunit protein uL14c from Gossypium barbadense (Sea Island cotton).